The primary structure comprises 483 residues: General transcription factor IIH subunit 4 (483 aa).

The interval 93-117 is disordered; sequence PQQQQSSQQSSSQQQQQQQQQQQQT. Residues 94 to 116 are compositionally biased toward low complexity; that stretch reads QQQQSSQQSSSQQQQQQQQQQQQ.

The protein belongs to the TFB2 family. In terms of assembly, component of the 7-subunit TFIIH core complex composed of XPB/repB, XPD/repD, gtf2h1, gtf2h2, gtf2h3, gtf2h4 and gtf2h5, which is active in NER. The core complex associates with the 3-subunit CDK-activating kinase (CAK) module composed of cycH/cyclin H, cdk7 and mnat1 to form the 10-subunit holoenzyme (holo-TFIIH) active in transcription.

It localises to the nucleus. In terms of biological role, component of the general transcription and DNA repair factor IIH (TFIIH) core complex, which is involved in general and transcription-coupled nucleotide excision repair (NER) of damaged DNA and, when complexed to CAK, in RNA transcription by RNA polymerase II. In NER, TFIIH acts by opening DNA around the lesion to allow the excision of the damaged oligonucleotide and its replacement by a new DNA fragment. In transcription, TFIIH has an essential role in transcription initiation. When the pre-initiation complex (PIC) has been established, TFIIH is required for promoter opening and promoter escape. Phosphorylation of the C-terminal tail (CTD) of the largest subunit of RNA polymerase II by the kinase module CAK controls the initiation of transcription. This Dictyostelium discoideum (Social amoeba) protein is General transcription factor IIH subunit 4 (gtf2h4).